A 395-amino-acid polypeptide reads, in one-letter code: Tyrosine--tRNA ligase (395 aa).

Residues 42–51 carry the 'HIGH' region motif; the sequence is PTAPDIHLGH. Residues 226–230 carry the 'KMSKS' region motif; sequence KMSKS. Lys-229 is an ATP binding site. Residues 334 to 394 enclose the S4 RNA-binding domain; it reads IGLATLLKEA…GKRKFARVTV (61 aa).

It belongs to the class-I aminoacyl-tRNA synthetase family. TyrS type 2 subfamily. In terms of assembly, homodimer.

The protein localises to the cytoplasm. It catalyses the reaction tRNA(Tyr) + L-tyrosine + ATP = L-tyrosyl-tRNA(Tyr) + AMP + diphosphate + H(+). In terms of biological role, catalyzes the attachment of tyrosine to tRNA(Tyr) in a two-step reaction: tyrosine is first activated by ATP to form Tyr-AMP and then transferred to the acceptor end of tRNA(Tyr). This chain is Tyrosine--tRNA ligase, found in Haemophilus influenzae (strain 86-028NP).